The primary structure comprises 152 residues: Nucleoplasmin-like protein (152 aa).

A compositionally biased stretch (acidic residues) spans 109 to 128 (EVVDMEEDDEEDDVAEDEED). The segment at 109-152 (EVVDMEEDDEEDDVAEDEEDEHPKKRAKIENAADGKNAKNNKKK) is disordered. Basic and acidic residues predominate over residues 136–145 (KIENAADGKN).

This sequence belongs to the nucleoplasmin family. In terms of assembly, decamer formed by two pentameric rings associated in a head-to-head fashion.

The protein localises to the nucleus. Binds to core histones and functions in the ATP-facilitated assembly of approximately regularly spaced nucleosomal arrays. May participate in parallel with other histone-binding proteins such as NAP-1. Its function is as follows. Inactive for chromatin assembly. In vitro it appears to form a high molecular mass aggregate with the core histones. The protein is Nucleoplasmin-like protein (Nlp) of Drosophila melanogaster (Fruit fly).